A 223-amino-acid polypeptide reads, in one-letter code: Ribonuclease 3 (223 aa).

The region spanning 4–127 (LENLQKLLGY…VMGAVYLEAG (124 aa)) is the RNase III domain. A Mg(2+)-binding site is contributed by Glu-40. Asp-44 is a catalytic residue. Asp-113 and Glu-116 together coordinate Mg(2+). Glu-116 is an active-site residue. One can recognise a DRBM domain in the interval 154–223 (DYKTALQEIT…AKIALEKMKK (70 aa)).

This sequence belongs to the ribonuclease III family. Homodimer. The cofactor is Mg(2+).

It localises to the cytoplasm. The catalysed reaction is Endonucleolytic cleavage to 5'-phosphomonoester.. Its function is as follows. Digests double-stranded RNA. Involved in the processing of primary rRNA transcript to yield the immediate precursors to the large and small rRNAs (23S and 16S). Processes some mRNAs, and tRNAs when they are encoded in the rRNA operon. Processes pre-crRNA and tracrRNA of type II CRISPR loci if present in the organism. In Campylobacter curvus (strain 525.92), this protein is Ribonuclease 3.